Consider the following 61-residue polypeptide: Small ribosomal subunit protein uS14 (61 aa).

Residues cysteine 24, cysteine 27, cysteine 40, and cysteine 43 each coordinate Zn(2+).

This sequence belongs to the universal ribosomal protein uS14 family. Zinc-binding uS14 subfamily. Part of the 30S ribosomal subunit. Contacts proteins S3 and S10. The cofactor is Zn(2+).

In terms of biological role, binds 16S rRNA, required for the assembly of 30S particles and may also be responsible for determining the conformation of the 16S rRNA at the A site. The protein is Small ribosomal subunit protein uS14 of Herpetosiphon aurantiacus (strain ATCC 23779 / DSM 785 / 114-95).